Here is a 402-residue protein sequence, read N- to C-terminus: Multidrug resistance protein MdtH (402 aa).

Residues 1–12 (MSRVSQARNLGK) lie on the Cytoplasmic side of the membrane. The chain crosses the membrane as a helical span at residues 13 to 33 (YFLLIDNMLVVLGFFVVFPLI). The Periplasmic portion of the chain corresponds to 34-98 (SIRFVDQMGW…GFATMGIAHE (65 aa)). Residues 99–116 (PWLLWFSCLLSGLGGTLF) traverse the membrane as a helical segment. Residues 117-138 (DPPRSALVVKLIRPQQRGRFFS) are Cytoplasmic-facing. A helical membrane pass occupies residues 139–159 (LLMMQDSASAVIGALLGSWLL). Residues 160–164 (QYDFR) lie on the Periplasmic side of the membrane. The chain crosses the membrane as a helical span at residues 165 to 185 (LVCATGAVLFVLCAAFNAWLL). The Cytoplasmic portion of the chain corresponds to 186-213 (PAWKLSTVRTPVREGMTRVMRDKRFVTY). Residues 214–234 (VLTLAGYYMLAVQVMLMLPIM) traverse the membrane as a helical segment. Over 235-243 (VNDVAGAPS) the chain is Periplasmic. Residues 244-264 (AVKWMYAIEACLSLTLLYPIA) form a helical membrane-spanning segment. Over 265 to 276 (RWSEKHFRLEHR) the chain is Cytoplasmic. The helical transmembrane segment at 277–297 (LMAGLLIMSLSMMPVGMVSGL) threads the bilayer. The Periplasmic portion of the chain corresponds to 298–299 (QQ). Residues 300–320 (LFTLICLFYIGSIIAEPARET) traverse the membrane as a helical segment. Over 321 to 339 (LSASLADARARGSYMGFSR) the chain is Cytoplasmic. Residues 340 to 360 (LGLAIGGAIGYIGGGWLFDLG) form a helical membrane-spanning segment. Residues 361–367 (KSAHQPE) are Periplasmic-facing. Residues 368 to 388 (LPWMMLGIIGIFTFLALGWQF) traverse the membrane as a helical segment. Residues 389–402 (SQKRAARRLLERDA) lie on the Cytoplasmic side of the membrane.

This sequence belongs to the major facilitator superfamily. DHA1 family. MdtH (TC 2.A.1.2.21) subfamily.

The protein resides in the cell inner membrane. In Shigella flexneri, this protein is Multidrug resistance protein MdtH.